The following is a 512-amino-acid chain: Allene oxide synthase 1, chloroplastic (512 aa).

The N-terminal 25 residues, 1–25 (MATAAACISFASPSPARVVIRRQTR), are a transit peptide targeting the chloroplast. The disordered stretch occupies residues 23–43 (QTRASASASATDRQEVVSPKR). 3 residues coordinate heme b: lysine 127, histidine 158, and lysine 162. Residue asparagine 315 participates in (13S)-hydroperoxy-(9Z,11E,15Z)-octadecatrienoate binding. Heme b-binding residues include lysine 463 and cysteine 465.

It belongs to the cytochrome P450 family. Heme b is required as a cofactor. Expressed in coleoptiles, and at lower level in leaves of dark-grown seedlings.

Its subcellular location is the plastid. The protein localises to the chloroplast membrane. The enzyme catalyses (13S)-hydroperoxy-(9Z,11E,15Z)-octadecatrienoate = (9Z,13S,15Z)-12,13-epoxyoctadeca-9,11,15-trienoate + H2O. The protein operates within lipid metabolism; oxylipin biosynthesis. In terms of biological role, involved in the biosynthesis of jasmonic acid, a growth regulator that is implicated also as a signaling molecule in plant defense. Converts 13-hydroperoxylinolenic acid to 12,13-epoxylinolenic acid. The polypeptide is Allene oxide synthase 1, chloroplastic (CYP74A1) (Oryza sativa subsp. japonica (Rice)).